The primary structure comprises 279 residues: Putative pyruvate, phosphate dikinase regulatory protein (279 aa).

Position 156–163 (156–163 (GVSRTSKT)) interacts with ADP.

It belongs to the pyruvate, phosphate/water dikinase regulatory protein family. PDRP subfamily.

It catalyses the reaction N(tele)-phospho-L-histidyl/L-threonyl-[pyruvate, phosphate dikinase] + ADP = N(tele)-phospho-L-histidyl/O-phospho-L-threonyl-[pyruvate, phosphate dikinase] + AMP + H(+). The enzyme catalyses N(tele)-phospho-L-histidyl/O-phospho-L-threonyl-[pyruvate, phosphate dikinase] + phosphate + H(+) = N(tele)-phospho-L-histidyl/L-threonyl-[pyruvate, phosphate dikinase] + diphosphate. In terms of biological role, bifunctional serine/threonine kinase and phosphorylase involved in the regulation of the pyruvate, phosphate dikinase (PPDK) by catalyzing its phosphorylation/dephosphorylation. This Maricaulis maris (strain MCS10) (Caulobacter maris) protein is Putative pyruvate, phosphate dikinase regulatory protein.